The primary structure comprises 320 residues: Aspartate carbamoyltransferase catalytic subunit (320 aa).

The carbamoyl phosphate site is built by Arg68 and Thr69. Lys96 contacts L-aspartate. Arg118, His148, and Gln151 together coordinate carbamoyl phosphate. L-aspartate contacts are provided by Arg181 and Arg236. 2 residues coordinate carbamoyl phosphate: Gly277 and Pro278.

It belongs to the aspartate/ornithine carbamoyltransferase superfamily. ATCase family. As to quaternary structure, heterododecamer (2C3:3R2) of six catalytic PyrB chains organized as two trimers (C3), and six regulatory PyrI chains organized as three dimers (R2).

It carries out the reaction carbamoyl phosphate + L-aspartate = N-carbamoyl-L-aspartate + phosphate + H(+). It functions in the pathway pyrimidine metabolism; UMP biosynthesis via de novo pathway; (S)-dihydroorotate from bicarbonate: step 2/3. Its function is as follows. Catalyzes the condensation of carbamoyl phosphate and aspartate to form carbamoyl aspartate and inorganic phosphate, the committed step in the de novo pyrimidine nucleotide biosynthesis pathway. The chain is Aspartate carbamoyltransferase catalytic subunit from Variovorax paradoxus (strain S110).